Reading from the N-terminus, the 102-residue chain is Putative defensin-like protein 298 (102 aa).

A signal peptide spans Met1–Ala29. 6 disulfides stabilise this stretch: Cys35–Cys53, Cys41–Cys58, Cys46–Cys60, Cys74–Cys93, Cys80–Cys98, and Cys86–Cys100.

Belongs to the DEFL family.

The protein resides in the secreted. The polypeptide is Putative defensin-like protein 298 (Arabidopsis thaliana (Mouse-ear cress)).